Here is a 177-residue protein sequence, read N- to C-terminus: ATP synthase subunit delta (177 aa).

Belongs to the ATPase delta chain family. In terms of assembly, F-type ATPases have 2 components, F(1) - the catalytic core - and F(0) - the membrane proton channel. F(1) has five subunits: alpha(3), beta(3), gamma(1), delta(1), epsilon(1). F(0) has three main subunits: a(1), b(2) and c(10-14). The alpha and beta chains form an alternating ring which encloses part of the gamma chain. F(1) is attached to F(0) by a central stalk formed by the gamma and epsilon chains, while a peripheral stalk is formed by the delta and b chains.

It localises to the cell inner membrane. F(1)F(0) ATP synthase produces ATP from ADP in the presence of a proton or sodium gradient. F-type ATPases consist of two structural domains, F(1) containing the extramembraneous catalytic core and F(0) containing the membrane proton channel, linked together by a central stalk and a peripheral stalk. During catalysis, ATP synthesis in the catalytic domain of F(1) is coupled via a rotary mechanism of the central stalk subunits to proton translocation. In terms of biological role, this protein is part of the stalk that links CF(0) to CF(1). It either transmits conformational changes from CF(0) to CF(1) or is implicated in proton conduction. This Edwardsiella ictaluri (strain 93-146) protein is ATP synthase subunit delta.